The following is an 898-amino-acid chain: DNA damage-induced apoptosis suppressor protein (898 aa).

Disordered stretches follow at residues 191–210 (CGSQ…DSDL), 643–670 (SINT…HEGS), and 710–749 (YPIN…FEES). Polar residues-rich tracts occupy residues 643–664 (SINT…PSSS) and 710–725 (YPIN…KPSL). A compositionally biased stretch (low complexity) spans 726–741 (QSISPSRYSRPRSQSD).

In terms of tissue distribution, highly expressed in the testis, spleen and heart. Expressed at high levels in the primary spermatocytes and to a lesser extent in the round spermatids. Also found in the bone marrow, brain, lung, kidney and liver.

The protein localises to the cytoplasm. It is found in the nucleus. In terms of biological role, may be an anti-apoptotic protein involved in DNA repair or cell survival. In Mus musculus (Mouse), this protein is DNA damage-induced apoptosis suppressor protein (Ddias).